Consider the following 714-residue polypeptide: MFNVHSVEIEWAGRPLKLETGKIARQADGAVLASYGETVVLATVVSAKSPKPGQDFFPLTVNYQEKTYAAGKIPGGYFKREGRPSEKETLVSRLIDRPIRPLFPEGYKNDTQVVVTVIQHDLENDPDVLSMVAASAALTLSGVPFMGPVGGARVGYINGEYVLNPHLDEMDESVLDLVVAGTQDAVLMVESEAKELNEDVMLGAVMFGHRGFQPVIDAIIKLAEVAAKEPREFEPEDHSALEAEMLSIAEAELRDAYKITQKADRYTAVDAVKAKVKAHFFPEGAEPKYTNEVIGAVFKHLQAKIVRWNILDTKSRIDGRDLETVRAIVSEVGILPRTHGSALFTRGETQAIVVATLGTGEDEQYVDSLTGMYKERFLLHYNFPPYSVGETGRMGSPGRREIGHGKLAWRAIRPMLPSPEQFPYTLRVVSEITESNGSSSMATVCGTSLALMDAGVPLAKPVAGIAMGLILEGERFAVLSDILGDEDHLGDMDFKVAGTEAGITSLQMDIKIAGITEEIMKVALAQAQNGRKHILGEMANAITEGRSQLGEFAPRIEVMTIPVDKIREVIGSGGKVIREIVEKTGAKINIEDDGTIKIASASGKEIEAARKWIHSIVAEPEIGVVYEGTVVKTADFGAFVNFFGSRDGLVHISQLAVDRVAKTQDVVKEGDKVWVKLMGFDERGKVRLSMKVVDQATGKEIVGDKKAEGDAAAE.

The Mg(2+) site is built by D487 and D493. Residues 554 to 613 (PRIEVMTIPVDKIREVIGSGGKVIREIVEKTGAKINIEDDGTIKIASASGKEIEAARKWI) enclose the KH domain. The S1 motif domain occupies 623–691 (GVVYEGTVVK…ERGKVRLSMK (69 aa)).

It belongs to the polyribonucleotide nucleotidyltransferase family. The cofactor is Mg(2+).

It localises to the cytoplasm. The catalysed reaction is RNA(n+1) + phosphate = RNA(n) + a ribonucleoside 5'-diphosphate. In terms of biological role, involved in mRNA degradation. Catalyzes the phosphorolysis of single-stranded polyribonucleotides processively in the 3'- to 5'-direction. This is Polyribonucleotide nucleotidyltransferase from Allorhizobium ampelinum (strain ATCC BAA-846 / DSM 112012 / S4) (Agrobacterium vitis (strain S4)).